The sequence spans 440 residues: Integral membrane protein GPR180 (440 aa).

The first 22 residues, Met1–Gly22, serve as a signal peptide directing secretion. N-linked (GlcNAc...) asparagine glycans are attached at residues Asn105 and Asn110. 7 consecutive transmembrane segments (helical) span residues Phe173–Trp193, Met202–Ala222, Ile249–Val269, Thr284–Trp304, Leu321–Leu341, Phe360–Ile380, and Val389–Phe409.

It localises to the membrane. This chain is Integral membrane protein GPR180 (GPR180), found in Homo sapiens (Human).